Consider the following 682-residue polypeptide: Guanylate cyclase soluble subunit beta-2 (682 aa).

His-43 is a binding site for heme. Residues 408–536 form the Guanylate cyclase domain; the sequence is TILFSDVVTF…DTVNTASRME (129 aa). Positions 592-667 are disordered; that stretch reads MGRPSAPADG…QPSPDETKTS (76 aa). Polar residues predominate over residues 649 to 667; sequence RNSTDAVNNQPSPDETKTS.

It belongs to the adenylyl cyclase class-4/guanylyl cyclase family. As to quaternary structure, heterodimer of an alpha and a beta chain. Heme is required as a cofactor. Kidney and liver.

It localises to the cytoplasm. It catalyses the reaction GTP = 3',5'-cyclic GMP + diphosphate. Activated by nitric oxide in the presence of magnesium or manganese ions. In Rattus norvegicus (Rat), this protein is Guanylate cyclase soluble subunit beta-2 (Gucy1b2).